The chain runs to 466 residues: Ribulose bisphosphate carboxylase large chain (466 aa).

The residue at position 5 (Lys5) is an N6,N6,N6-trimethyllysine. Residues Asn114 and Thr164 each contribute to the substrate site. Residue Lys166 is the Proton acceptor of the active site. Substrate is bound at residue Lys168. Mg(2+) contacts are provided by Lys192, Asp194, and Glu195. Lys192 carries the post-translational modification N6-carboxylysine. The active-site Proton acceptor is the His285. Arg286, His318, and Ser370 together coordinate substrate.

This sequence belongs to the RuBisCO large chain family. Type I subfamily. As to quaternary structure, heterohexadecamer of 8 large chains and 8 small chains; disulfide-linked. The disulfide link is formed within the large subunit homodimers. Requires Mg(2+) as cofactor. The disulfide bond which can form in the large chain dimeric partners within the hexadecamer appears to be associated with oxidative stress and protein turnover.

It localises to the plastid. The protein resides in the chloroplast. The catalysed reaction is 2 (2R)-3-phosphoglycerate + 2 H(+) = D-ribulose 1,5-bisphosphate + CO2 + H2O. It catalyses the reaction D-ribulose 1,5-bisphosphate + O2 = 2-phosphoglycolate + (2R)-3-phosphoglycerate + 2 H(+). In terms of biological role, ruBisCO catalyzes two reactions: the carboxylation of D-ribulose 1,5-bisphosphate, the primary event in carbon dioxide fixation, as well as the oxidative fragmentation of the pentose substrate in the photorespiration process. Both reactions occur simultaneously and in competition at the same active site. In Tropaeolum majus (Common nasturtium), this protein is Ribulose bisphosphate carboxylase large chain.